We begin with the raw amino-acid sequence, 1061 residues long: TonB-dependent transporter Oar (1061 aa).

Positions 1–26 (MHLNRVLRETGVVVAAGLLYGSAAFA) are cleaved as a signal peptide. Residues 121–243 (EIVGAPPTID…TGGVINAVTR (123 aa)) form the TBDR plug domain. Positions 248–1061 (EFHGSVFANW…QVRFGIRYTF (814 aa)) constitute a TBDR beta-barrel domain. A disordered region spans residues 701-722 (RSLAEPGQGTATSCDPSSFESQ). Residues 709–722 (GTATSCDPSSFESQ) are compositionally biased toward polar residues.

Belongs to the TonB-dependent receptor family. Interacts with TonB. Part of a transport system composed of the outer membrane transporter Oar, the trans-periplasmic binding protein TonB and the inner membrane proteins ExbB and ExbD.

The protein resides in the cell outer membrane. Functionally, required for secretion of the protease PopC across the bacterial outer membrane. Binds and probably transports PopC from the periplasm to the extracellular milieu. It derives its energy for transport by interacting with the trans-periplasmic membrane protein TonB. Required for cellular adhesion during fruiting body formation, a multicellular developmental program that is induced in response to starvation. This chain is TonB-dependent transporter Oar, found in Myxococcus xanthus.